The chain runs to 213 residues: Orotate phosphoribosyltransferase (213 aa).

A 5-phospho-alpha-D-ribose 1-diphosphate-binding site is contributed by Lys-26. 34–35 (FF) contributes to the orotate binding site. Residues 72–73 (YK), Arg-99, Lys-100, Lys-103, His-105, and 124–132 (DDVITAGTA) contribute to the 5-phospho-alpha-D-ribose 1-diphosphate site. Orotate contacts are provided by Thr-128 and Arg-156.

It belongs to the purine/pyrimidine phosphoribosyltransferase family. PyrE subfamily. As to quaternary structure, homodimer. The cofactor is Mg(2+).

It catalyses the reaction orotidine 5'-phosphate + diphosphate = orotate + 5-phospho-alpha-D-ribose 1-diphosphate. It functions in the pathway pyrimidine metabolism; UMP biosynthesis via de novo pathway; UMP from orotate: step 1/2. In terms of biological role, catalyzes the transfer of a ribosyl phosphate group from 5-phosphoribose 1-diphosphate to orotate, leading to the formation of orotidine monophosphate (OMP). This chain is Orotate phosphoribosyltransferase, found in Pectobacterium carotovorum subsp. carotovorum (strain PC1).